Consider the following 142-residue polypeptide: Transcription antitermination protein NusB (142 aa).

The protein belongs to the NusB family.

Functionally, involved in transcription antitermination. Required for transcription of ribosomal RNA (rRNA) genes. Binds specifically to the boxA antiterminator sequence of the ribosomal RNA (rrn) operons. The protein is Transcription antitermination protein NusB of Thermobifida fusca (strain YX).